A 399-amino-acid polypeptide reads, in one-letter code: MAKEKFERTKPHLNIGTIGHIDHGKTTLTAAITKALAYKGFADFTPFDAIDKAPEEKARGITINVTHVEYETEKRHYAHIDCPGHADYIKNMITGAAQMDGAILVVAATDGVMPQTREHVLLARQVNVPAMVVFINKVDMVDDEELVELVEEEVRDLLSKYEFPGDEVPVIKGSALMALEADNPDDPWVQKIYELMDAVDNYVPEPQRETDKPFLMPIEDIFSITGRGTVVTGRIERGVIHVGDEVEIVGLSYEVRKTVVTGVEMFRKLLDEGVAGDNVGCLLRGVGKDEVKRGQVLAKPGSITPHKKFKANIYVLKKEEGGRHTPFTKGYRPQFYIRTADVTGELVDLPEGVEMVMPGDNVVMTVELIYPVAIEKGMRFAVREGGRTVGAGVVSEIIE.

The 198-residue stretch at 10-207 (KPHLNIGTIG…AVDNYVPEPQ (198 aa)) folds into the tr-type G domain. A G1 region spans residues 19-26 (GHIDHGKT). Residue 19–26 (GHIDHGKT) participates in GTP binding. Residue Thr-26 coordinates Mg(2+). The G2 stretch occupies residues 60–64 (GITIN). Residues 81-84 (DCPG) form a G3 region. GTP-binding positions include 81–85 (DCPGH) and 136–139 (NKVD). Residues 136–139 (NKVD) form a G4 region. Residues 174 to 176 (SAL) form a G5 region.

This sequence belongs to the TRAFAC class translation factor GTPase superfamily. Classic translation factor GTPase family. EF-Tu/EF-1A subfamily. As to quaternary structure, monomer.

Its subcellular location is the cytoplasm. It catalyses the reaction GTP + H2O = GDP + phosphate + H(+). Functionally, GTP hydrolase that promotes the GTP-dependent binding of aminoacyl-tRNA to the A-site of ribosomes during protein biosynthesis. The protein is Elongation factor Tu of Kosmotoga olearia (strain ATCC BAA-1733 / DSM 21960 / TBF 19.5.1).